Consider the following 349-residue polypeptide: Isopentenyl-diphosphate delta-isomerase (349 aa).

6–7 (RK) contacts substrate. FMN contacts are provided by residues 62-64 (AMT), S93, and N122. Residue Q152 coordinates substrate. E153 is a binding site for Mg(2+). FMN contacts are provided by residues K184, T214, 258–259 (GG), and 280–281 (AG).

This sequence belongs to the IPP isomerase type 2 family. As to quaternary structure, homooctamer. Dimer of tetramers. FMN serves as cofactor. NADPH is required as a cofactor. Requires Mg(2+) as cofactor.

The protein resides in the cytoplasm. The catalysed reaction is isopentenyl diphosphate = dimethylallyl diphosphate. In terms of biological role, involved in the biosynthesis of isoprenoids. Catalyzes the 1,3-allylic rearrangement of the homoallylic substrate isopentenyl (IPP) to its allylic isomer, dimethylallyl diphosphate (DMAPP). In Bacillus cereus (strain B4264), this protein is Isopentenyl-diphosphate delta-isomerase.